A 490-amino-acid polypeptide reads, in one-letter code: Glutamyl-tRNA(Gln) amidotransferase subunit A (490 aa).

Residues Lys-76 and Ser-151 each act as charge relay system in the active site. Catalysis depends on Ser-175, which acts as the Acyl-ester intermediate.

Belongs to the amidase family. GatA subfamily. Heterotrimer of A, B and C subunits.

It carries out the reaction L-glutamyl-tRNA(Gln) + L-glutamine + ATP + H2O = L-glutaminyl-tRNA(Gln) + L-glutamate + ADP + phosphate + H(+). Functionally, allows the formation of correctly charged Gln-tRNA(Gln) through the transamidation of misacylated Glu-tRNA(Gln) in organisms which lack glutaminyl-tRNA synthetase. The reaction takes place in the presence of glutamine and ATP through an activated gamma-phospho-Glu-tRNA(Gln). The protein is Glutamyl-tRNA(Gln) amidotransferase subunit A of Methylobacillus flagellatus (strain ATCC 51484 / DSM 6875 / VKM B-1610 / KT).